Reading from the N-terminus, the 208-residue chain is Protein-L-isoaspartate O-methyltransferase (208 aa).

Residue serine 59 is part of the active site.

Belongs to the methyltransferase superfamily. L-isoaspartyl/D-aspartyl protein methyltransferase family.

It localises to the cytoplasm. It carries out the reaction [protein]-L-isoaspartate + S-adenosyl-L-methionine = [protein]-L-isoaspartate alpha-methyl ester + S-adenosyl-L-homocysteine. Catalyzes the methyl esterification of L-isoaspartyl residues in peptides and proteins that result from spontaneous decomposition of normal L-aspartyl and L-asparaginyl residues. It plays a role in the repair and/or degradation of damaged proteins. The sequence is that of Protein-L-isoaspartate O-methyltransferase from Pectobacterium carotovorum subsp. carotovorum (strain PC1).